Here is a 293-residue protein sequence, read N- to C-terminus: Tumor necrosis factor receptor type 1-associated DEATH domain protein (293 aa).

A Nuclear export signal motif is present at residues 156 to 171; it reads LRDDEVTQLEQQLQNS. Residues 200–290 enclose the Death domain; that stretch reads TPADQQRFAA…SMAEIMLGIQ (91 aa). The short motif at 216–229 is the Nuclear localization signal element; sequence KRVGRALQKNCRAL.

As to quaternary structure, heterodimer with tnfrsf1a.

It is found in the nucleus. It localises to the cytoplasm. The protein localises to the cytoskeleton. Its function is as follows. Adapter molecule for tnfrsf1a that specifically associates with the cytoplasmic domain of activated tnfrsf1a mediating its interaction with fadd. The polypeptide is Tumor necrosis factor receptor type 1-associated DEATH domain protein (Danio rerio (Zebrafish)).